The following is a 399-amino-acid chain: Argininosuccinate synthase (399 aa).

ATP is bound at residue 12-20; the sequence is AFSGGLDTS. Residue Tyr90 coordinates L-citrulline. Gly120 is an ATP binding site. L-aspartate is bound by residues Thr122, Asn126, and Asp127. Asn126 provides a ligand contact to L-citrulline. The L-citrulline site is built by Arg130, Ser175, Glu260, and Tyr272.

The protein belongs to the argininosuccinate synthase family. Type 1 subfamily. In terms of assembly, homotetramer.

Its subcellular location is the cytoplasm. The enzyme catalyses L-citrulline + L-aspartate + ATP = 2-(N(omega)-L-arginino)succinate + AMP + diphosphate + H(+). It functions in the pathway amino-acid biosynthesis; L-arginine biosynthesis; L-arginine from L-ornithine and carbamoyl phosphate: step 2/3. This Methanothermobacter thermautotrophicus (strain ATCC 29096 / DSM 1053 / JCM 10044 / NBRC 100330 / Delta H) (Methanobacterium thermoautotrophicum) protein is Argininosuccinate synthase.